We begin with the raw amino-acid sequence, 169 residues long: S-ribosylhomocysteine lyase (169 aa).

Residues histidine 54, histidine 58, and cysteine 128 each coordinate Fe cation.

It belongs to the LuxS family. As to quaternary structure, homodimer. Requires Fe cation as cofactor.

It carries out the reaction S-(5-deoxy-D-ribos-5-yl)-L-homocysteine = (S)-4,5-dihydroxypentane-2,3-dione + L-homocysteine. In terms of biological role, involved in the synthesis of autoinducer 2 (AI-2) which is secreted by bacteria and is used to communicate both the cell density and the metabolic potential of the environment. The regulation of gene expression in response to changes in cell density is called quorum sensing. Catalyzes the transformation of S-ribosylhomocysteine (RHC) to homocysteine (HC) and 4,5-dihydroxy-2,3-pentadione (DPD). The sequence is that of S-ribosylhomocysteine lyase from Shewanella putrefaciens (strain CN-32 / ATCC BAA-453).